A 480-amino-acid polypeptide reads, in one-letter code: Proline--tRNA ligase (480 aa).

This sequence belongs to the class-II aminoacyl-tRNA synthetase family. ProS type 3 subfamily. In terms of assembly, homodimer.

It localises to the cytoplasm. The catalysed reaction is tRNA(Pro) + L-proline + ATP = L-prolyl-tRNA(Pro) + AMP + diphosphate. In terms of biological role, catalyzes the attachment of proline to tRNA(Pro) in a two-step reaction: proline is first activated by ATP to form Pro-AMP and then transferred to the acceptor end of tRNA(Pro). This chain is Proline--tRNA ligase, found in Alkaliphilus oremlandii (strain OhILAs) (Clostridium oremlandii (strain OhILAs)).